Reading from the N-terminus, the 336-residue chain is Glyceraldehyde-3-phosphate dehydrogenase (336 aa).

Residues 12–13 (RI), aspartate 34, and arginine 79 contribute to the NAD(+) site. D-glyceraldehyde 3-phosphate-binding positions include 150 to 152 (SCT), threonine 181, 210 to 211 (TG), and arginine 233. Cysteine 151 serves as the catalytic Nucleophile. Residue asparagine 315 participates in NAD(+) binding.

It belongs to the glyceraldehyde-3-phosphate dehydrogenase family. Homotetramer.

It is found in the cytoplasm. The enzyme catalyses D-glyceraldehyde 3-phosphate + phosphate + NAD(+) = (2R)-3-phospho-glyceroyl phosphate + NADH + H(+). It participates in carbohydrate degradation; glycolysis; pyruvate from D-glyceraldehyde 3-phosphate: step 1/5. This Aspergillus niger protein is Glyceraldehyde-3-phosphate dehydrogenase (gpdA).